We begin with the raw amino-acid sequence, 122 residues long: Large ribosomal subunit protein uL14 (122 aa).

This sequence belongs to the universal ribosomal protein uL14 family. Part of the 50S ribosomal subunit. Forms a cluster with proteins L3 and L19. In the 70S ribosome, L14 and L19 interact and together make contacts with the 16S rRNA in bridges B5 and B8.

Binds to 23S rRNA. Forms part of two intersubunit bridges in the 70S ribosome. The sequence is that of Large ribosomal subunit protein uL14 from Magnetococcus marinus (strain ATCC BAA-1437 / JCM 17883 / MC-1).